A 193-amino-acid polypeptide reads, in one-letter code: ATP-dependent protease subunit HslV (193 aa).

T12 is a catalytic residue. Na(+)-binding residues include A167, C170, and T173.

It belongs to the peptidase T1B family. HslV subfamily. A double ring-shaped homohexamer of HslV is capped on each side by a ring-shaped HslU homohexamer. The assembly of the HslU/HslV complex is dependent on binding of ATP.

It is found in the cytoplasm. The catalysed reaction is ATP-dependent cleavage of peptide bonds with broad specificity.. Its activity is regulated as follows. Allosterically activated by HslU binding. Its function is as follows. Protease subunit of a proteasome-like degradation complex believed to be a general protein degrading machinery. The chain is ATP-dependent protease subunit HslV from Bartonella henselae (strain ATCC 49882 / DSM 28221 / CCUG 30454 / Houston 1) (Rochalimaea henselae).